A 481-amino-acid chain; its full sequence is Proline--tRNA ligase 2 (481 aa).

The protein belongs to the class-II aminoacyl-tRNA synthetase family. ProS type 3 subfamily. Homodimer.

Its subcellular location is the cytoplasm. It catalyses the reaction tRNA(Pro) + L-proline + ATP = L-prolyl-tRNA(Pro) + AMP + diphosphate. Functionally, catalyzes the attachment of proline to tRNA(Pro) in a two-step reaction: proline is first activated by ATP to form Pro-AMP and then transferred to the acceptor end of tRNA(Pro). This chain is Proline--tRNA ligase 2, found in Clostridioides difficile (strain 630) (Peptoclostridium difficile).